The chain runs to 299 residues: NAD kinase (299 aa).

Asp-64 serves as the catalytic Proton acceptor. Residues 64 to 65 (DG), 138 to 139 (ND), Arg-149, Arg-166, Asp-168, 179 to 184 (TGYAVS), and Gln-238 contribute to the NAD(+) site.

It belongs to the NAD kinase family. A divalent metal cation serves as cofactor.

It is found in the cytoplasm. The enzyme catalyses NAD(+) + ATP = ADP + NADP(+) + H(+). In terms of biological role, involved in the regulation of the intracellular balance of NAD and NADP, and is a key enzyme in the biosynthesis of NADP. Catalyzes specifically the phosphorylation on 2'-hydroxyl of the adenosine moiety of NAD to yield NADP. This chain is NAD kinase, found in Nitratidesulfovibrio vulgaris (strain ATCC 29579 / DSM 644 / CCUG 34227 / NCIMB 8303 / VKM B-1760 / Hildenborough) (Desulfovibrio vulgaris).